The following is a 364-amino-acid chain: Aminomethyltransferase (364 aa).

Belongs to the GcvT family. The glycine cleavage system is composed of four proteins: P, T, L and H.

The catalysed reaction is N(6)-[(R)-S(8)-aminomethyldihydrolipoyl]-L-lysyl-[protein] + (6S)-5,6,7,8-tetrahydrofolate = N(6)-[(R)-dihydrolipoyl]-L-lysyl-[protein] + (6R)-5,10-methylene-5,6,7,8-tetrahydrofolate + NH4(+). In terms of biological role, the glycine cleavage system catalyzes the degradation of glycine. The sequence is that of Aminomethyltransferase from Shigella boydii serotype 18 (strain CDC 3083-94 / BS512).